Here is a 320-residue protein sequence, read N- to C-terminus: 3-O-acetylpapaveroxine carboxylesterase CXE1 (320 aa).

An Involved in the stabilization of the negatively charged intermediate by the formation of the oxyanion hole motif is present at residues 72-74; it reads HGG. Active-site residues include Ser158, Asp262, and His292.

Belongs to the 'GDXG' lipolytic enzyme family.

It catalyses the reaction 3-O-acetylpapaveroxine + H2O = narcotine hemiacetal + acetate + H(+). It functions in the pathway alkaloid biosynthesis. In terms of biological role, carboxylesterase involved in the biosynthesis of the benzylisoquinoline alkaloid noscapine. Converts 3-O-acetylpapaveroxine to papaveroxine which spontaneously rearranges to narcotine hemiacetal. The polypeptide is 3-O-acetylpapaveroxine carboxylesterase CXE1 (Papaver somniferum (Opium poppy)).